The sequence spans 1708 residues: Chromatin-remodeling ATPase INO80 (1708 aa).

Disordered stretches follow at residues 1–312, 408–581, 626–648, and 718–747; these read MTGA…RKTL, EIQD…SAFE, ASKQSRKWQERTNKSMKDTQARA, and AGADSSGDTAVDGSDETIQPGKADHTIDLP. 2 stretches are compositionally biased toward polar residues: residues 24–37 and 88–102; these read PNKNRSYYPNNDQY and SSQYQTHSSAGTPQF. Low complexity-rich tracts occupy residues 108–122 and 211–220; these read YSASMMSSNGASSYN and ALPGPATTIT. 3 stretches are compositionally biased toward basic and acidic residues: residues 265–285, 408–417, and 426–463; these read RLEKKPSAEKRRRNVEQEPKS, EIQDEKERKK, and ENTVRLEMQKKLEAERKANKANDAAEKAKFLREAERAQ. Residues 395-478 are a coiled coil; that stretch reads ANEASVIAEV…TKRALEGVTS (84 aa). Positions 507–522 are enriched in basic residues; it reads PSRRKSGRSGTSRPKK. Basic and acidic residues-rich tracts occupy residues 523–534, 551–571, and 632–646; these read SKEQKQAEKDAA, PKEDPRKETVKKEAKGARSKE, and KWQERTNKSMKDTQA. The DBINO domain maps to 592-717; it reads IWRDIARKDI…SHFIGRKIKG (126 aa). The stretch at 634–706 forms a coiled coil; the sequence is QERTNKSMKD…LNFLISQTEL (73 aa). One can recognise a Helicase ATP-binding domain in the interval 845–1017; sequence VNLYEQGING…WALLHFIMPT (173 aa). Residue 858–865 participates in ATP binding; the sequence is DEMGLGKT. A DEAQ box motif is present at residues 968-971; that stretch reads DEAQ. In terms of domain architecture, Helicase C-terminal spans 1422 to 1582; the sequence is KLDELLRELK…GVDFNTRNRE (161 aa). The tract at residues 1643-1708 is disordered; the sequence is GNFDDISAKP…LIDGDGGLES (66 aa). Polar residues predominate over residues 1658–1672; the sequence is PVSTADNFGTPSSTP. Basic residues predominate over residues 1675-1691; that stretch reads KRGRGRGNGKGSSKRAK. The segment covering 1692–1701 has biased composition (basic and acidic residues); sequence TTTERLRLID.

Belongs to the SNF2/RAD54 helicase family. In terms of assembly, component of the INO80 chromatin-remodeling complex.

The protein resides in the nucleus. The enzyme catalyses ATP + H2O = ADP + phosphate + H(+). Functionally, ATPase component of the INO80 complex which remodels chromatin by shifting nucleosomes and is involved in DNA repair. This Aspergillus fumigatus (strain ATCC MYA-4609 / CBS 101355 / FGSC A1100 / Af293) (Neosartorya fumigata) protein is Chromatin-remodeling ATPase INO80 (ino80).